The following is a 20-amino-acid chain: Octopamine receptor (20 aa).

It belongs to the G-protein coupled receptor 1 family.

The protein resides in the cell membrane. In terms of biological role, putative receptor for octopamine. Octopamine (OA) is a neurotransmitter, neurohormone, and neuromodulator in invertebrates. The activity of this receptor is mediated by G proteins which activate adenylyl cyclase. The polypeptide is Octopamine receptor (Photinus pyralis (Common eastern firefly)).